The following is a 286-amino-acid chain: ATP synthase gamma chain (286 aa).

The protein belongs to the ATPase gamma chain family. In terms of assembly, F-type ATPases have 2 components, CF(1) - the catalytic core - and CF(0) - the membrane proton channel. CF(1) has five subunits: alpha(3), beta(3), gamma(1), delta(1), epsilon(1). CF(0) has three main subunits: a, b and c.

Its subcellular location is the cell inner membrane. In terms of biological role, produces ATP from ADP in the presence of a proton gradient across the membrane. The gamma chain is believed to be important in regulating ATPase activity and the flow of protons through the CF(0) complex. This chain is ATP synthase gamma chain, found in Teredinibacter turnerae (strain ATCC 39867 / T7901).